A 421-amino-acid chain; its full sequence is UDP-N-acetylglucosamine 1-carboxyvinyltransferase (421 aa).

Residue 22–23 (KN) coordinates phosphoenolpyruvate. Arg92 lines the UDP-N-acetyl-alpha-D-glucosamine pocket. The active-site Proton donor is Cys116. A 2-(S-cysteinyl)pyruvic acid O-phosphothioketal modification is found at Cys116. Residues Asp306 and Val328 each contribute to the UDP-N-acetyl-alpha-D-glucosamine site.

Belongs to the EPSP synthase family. MurA subfamily.

It localises to the cytoplasm. It carries out the reaction phosphoenolpyruvate + UDP-N-acetyl-alpha-D-glucosamine = UDP-N-acetyl-3-O-(1-carboxyvinyl)-alpha-D-glucosamine + phosphate. It functions in the pathway cell wall biogenesis; peptidoglycan biosynthesis. Its function is as follows. Cell wall formation. Adds enolpyruvyl to UDP-N-acetylglucosamine. This Thermotoga petrophila (strain ATCC BAA-488 / DSM 13995 / JCM 10881 / RKU-1) protein is UDP-N-acetylglucosamine 1-carboxyvinyltransferase.